Consider the following 550-residue polypeptide: Hydroxylamine reductase (550 aa).

4 residues coordinate [2Fe-2S] cluster: Cys3, Cys6, Cys18, and Cys25. 8 residues coordinate hybrid [4Fe-2O-2S] cluster: His249, Glu273, Cys317, Cys405, Cys433, Cys458, Glu492, and Lys494. Cysteine persulfide is present on Cys405.

The protein belongs to the HCP family. It depends on [2Fe-2S] cluster as a cofactor. The cofactor is hybrid [4Fe-2O-2S] cluster.

The protein resides in the cytoplasm. It carries out the reaction A + NH4(+) + H2O = hydroxylamine + AH2 + H(+). In terms of biological role, catalyzes the reduction of hydroxylamine to form NH(3) and H(2)O. This chain is Hydroxylamine reductase, found in Salmonella choleraesuis (strain SC-B67).